The chain runs to 229 residues: Sugar fermentation stimulation protein homolog (229 aa).

Belongs to the SfsA family.

This is Sugar fermentation stimulation protein homolog from Clostridium novyi (strain NT).